The chain runs to 427 residues: Probable glucuronosyltransferase Os03g0107900 (427 aa).

Residues 1–33 (MAMRGDPKQRRASASAPHGGAAHHVADKLRRHS) lie on the Cytoplasmic side of the membrane. The chain crosses the membrane as a helical; Signal-anchor for type II membrane protein span at residues 34-54 (TFLLLLLLLWFALSLYLFLSA). The Lumenal segment spans residues 55–427 (TPPPPRPAFL…QRRHVESWKR (373 aa)). Residues N136, N168, N264, and N374 are each glycosylated (N-linked (GlcNAc...) asparagine).

This sequence belongs to the glycosyltransferase 47 family.

It is found in the golgi apparatus membrane. Involved in the synthesis of glucuronoxylan hemicellulose in secondary cell walls. This chain is Probable glucuronosyltransferase Os03g0107900, found in Oryza sativa subsp. japonica (Rice).